Here is a 265-residue protein sequence, read N- to C-terminus: Small ribosomal subunit protein uS2 (265 aa).

The protein belongs to the universal ribosomal protein uS2 family.

The sequence is that of Small ribosomal subunit protein uS2 from Microcystis aeruginosa (strain NIES-843 / IAM M-2473).